A 212-amino-acid chain; its full sequence is Uridine kinase (212 aa).

13–20 (GASASGKS) is a binding site for ATP.

It belongs to the uridine kinase family.

The protein localises to the cytoplasm. It carries out the reaction uridine + ATP = UMP + ADP + H(+). The catalysed reaction is cytidine + ATP = CMP + ADP + H(+). The protein operates within pyrimidine metabolism; CTP biosynthesis via salvage pathway; CTP from cytidine: step 1/3. Its pathway is pyrimidine metabolism; UMP biosynthesis via salvage pathway; UMP from uridine: step 1/1. The sequence is that of Uridine kinase from Shewanella frigidimarina (strain NCIMB 400).